The primary structure comprises 401 residues: Nodal homolog 3-C (401 aa).

Positions 1-18 are cleaved as a signal peptide; that stretch reads MAFLSLFLCLVFSSPLMA. The propeptide occupies 19 to 274; that stretch reads MPPALQGRKA…KVNGFRRLRR (256 aa). Asparagine 168, asparagine 337, and asparagine 344 each carry an N-linked (GlcNAc...) asparagine glycan. 2 cysteine pairs are disulfide-bonded: cysteine 299/cysteine 365 and cysteine 328/cysteine 396.

The protein belongs to the TGF-beta family. Monomer. The propeptide region interacts with bmp4 in a non-covalent manner. As to expression, expressed in the dorsal marginal region of late blastula, becoming restricted to the Spemann organizer at the early gastrula stage.

It localises to the secreted. Functionally, exhibits mesoderm-dorsalizing activity and neural-inducing activity, but lacks mesoderm-inducing activity. Regulates the expression of specific mesodermal and neural genes. Induces convergent extension movements at the embryonic midline by activating the fgf signaling pathway to induce t/bra expression in the organizer region. Acts with wnt11 to induce Spemann organizer cells and induce axis formation. The unprocessed protein antagonizes bmp-signaling. This chain is Nodal homolog 3-C, found in Xenopus tropicalis (Western clawed frog).